The primary structure comprises 256 residues: Non-homologous end joining protein Ku 2 (256 aa).

The 172-residue stretch at 13 to 184 (FADTDVAVKL…SLELQESPVS (172 aa)) folds into the Ku domain.

Belongs to the prokaryotic Ku family. As to quaternary structure, homodimer. Interacts with LigD.

With LigD forms a non-homologous end joining (NHEJ) DNA repair enzyme, which repairs dsDNA breaks with reduced fidelity. Binds linear dsDNA with 5'- and 3'- overhangs but not closed circular dsDNA nor ssDNA. Recruits and stimulates the ligase activity of LigD. The sequence is that of Non-homologous end joining protein Ku 2 from Geotalea uraniireducens (strain Rf4) (Geobacter uraniireducens).